Here is a 150-residue protein sequence, read N- to C-terminus: Cytochrome c-type biogenesis protein CcmE (150 aa).

At 1–9 (MRNLKKTRR) the chain is on the cytoplasmic side. The chain crosses the membrane as a helical; Signal-anchor for type II membrane protein span at residues 10 to 30 (IQILLVAGGALVLSTALIGYG). The Periplasmic portion of the chain corresponds to 31–150 (MRDGINFFRA…VYRDPAQPEG (120 aa)). Heme-binding residues include His-123 and Tyr-127.

This sequence belongs to the CcmE/CycJ family.

It is found in the cell inner membrane. Functionally, heme chaperone required for the biogenesis of c-type cytochromes. Transiently binds heme delivered by CcmC and transfers the heme to apo-cytochromes in a process facilitated by CcmF and CcmH. In Rhodobacter capsulatus (strain ATCC BAA-309 / NBRC 16581 / SB1003), this protein is Cytochrome c-type biogenesis protein CcmE.